The primary structure comprises 469 residues: 6-phospho-beta-galactosidase (469 aa).

D-galactose 6-phosphate contacts are provided by glutamine 19, histidine 116, asparagine 159, glutamate 160, and asparagine 297. Residue glutamate 160 is the Proton donor of the active site. The Nucleophile role is filled by glutamate 375. D-galactose 6-phosphate contacts are provided by serine 428, tryptophan 429, lysine 435, and tyrosine 437.

This sequence belongs to the glycosyl hydrolase 1 family.

It catalyses the reaction a 6-phospho-beta-D-galactoside + H2O = D-galactose 6-phosphate + an alcohol. It functions in the pathway carbohydrate metabolism; lactose degradation; D-galactose 6-phosphate and beta-D-glucose from lactose 6-phosphate: step 1/1. This chain is 6-phospho-beta-galactosidase, found in Streptococcus equi subsp. zooepidemicus (strain H70).